We begin with the raw amino-acid sequence, 593 residues long: Chromosomal replication initiator protein DnaA (593 aa).

The tract at residues 1–71 (MSDPCWEQCV…EIISNSDAGP (71 aa)) is domain I, interacts with DnaA modulators. Residues 71 to 256 (PKSLEIAVAQ…DVEGGIQHKH (186 aa)) are domain II. The segment at 97–186 (AVPVPDPLPS…STESSADRER (90 aa)) is disordered. Residues 113-124 (SFQPPKGNTSAD) show a composition bias toward polar residues. The domain III, AAA+ region stretch occupies residues 257–473 (NLNTTFIFDN…GALKRVIANA (217 aa)). ATP contacts are provided by G301, G303, K304, and T305. The tract at residues 474-593 (QFTQRSISVE…VKNLLRTLTT (120 aa)) is domain IV, binds dsDNA.

It belongs to the DnaA family. As to quaternary structure, oligomerizes as a right-handed, spiral filament on DNA at oriC.

It is found in the cytoplasm. Functionally, plays an essential role in the initiation and regulation of chromosomal replication. ATP-DnaA binds to the origin of replication (oriC) to initiate formation of the DNA replication initiation complex once per cell cycle. Binds the DnaA box (a 9 base pair repeat at the origin) and separates the double-stranded (ds)DNA. Forms a right-handed helical filament on oriC DNA; dsDNA binds to the exterior of the filament while single-stranded (ss)DNA is stabiized in the filament's interior. The ATP-DnaA-oriC complex binds and stabilizes one strand of the AT-rich DNA unwinding element (DUE), permitting loading of DNA polymerase. After initiation quickly degrades to an ADP-DnaA complex that is not apt for DNA replication. Binds acidic phospholipids. The sequence is that of Chromosomal replication initiator protein DnaA from Teredinibacter turnerae (strain ATCC 39867 / T7901).